The sequence spans 275 residues: NH(3)-dependent NAD(+) synthetase (275 aa).

46–53 (GISGGQDS) provides a ligand contact to ATP. Position 52 (Asp52) interacts with Mg(2+). Deamido-NAD(+) is bound at residue Arg140. Residue Thr160 coordinates ATP. Glu165 contributes to the Mg(2+) binding site. Deamido-NAD(+)-binding residues include Lys173 and Asp180. Positions 189 and 211 each coordinate ATP. Residue 260 to 261 (HK) coordinates deamido-NAD(+).

It belongs to the NAD synthetase family. Homodimer.

The enzyme catalyses deamido-NAD(+) + NH4(+) + ATP = AMP + diphosphate + NAD(+) + H(+). It functions in the pathway cofactor biosynthesis; NAD(+) biosynthesis; NAD(+) from deamido-NAD(+) (ammonia route): step 1/1. Its function is as follows. Catalyzes the ATP-dependent amidation of deamido-NAD to form NAD. Uses ammonia as a nitrogen source. The chain is NH(3)-dependent NAD(+) synthetase from Escherichia coli O7:K1 (strain IAI39 / ExPEC).